We begin with the raw amino-acid sequence, 353 residues long: Photosystem II protein D1 (353 aa).

Thr2 carries the N-acetylthreonine modification. Residue Thr2 is modified to Phosphothreonine. 3 helical membrane-spanning segments follow: residues 29-46, 118-133, and 142-156; these read YIGWFGVLMIPTLLTATS, HFLLGVACYMGREWEL, and WIAVAYSAPVAAATA. His118 lines the chlorophyll a pocket. Residue Tyr126 coordinates pheophytin a. Positions 170 and 189 each coordinate [CaMn4O5] cluster. The chain crosses the membrane as a helical span at residues 197-218; sequence FHMLGVAGVFGGSLFSAMHGSL. His198 is a binding site for chlorophyll a. Residues His215 and 264-265 each bind a quinone; that span reads SF. His215 contributes to the Fe cation binding site. His272 is a binding site for Fe cation. Residues 274-288 traverse the membrane as a helical segment; that stretch reads FLAAWPVVGIWFTAL. Residues His332, Glu333, Asp342, and Ala344 each contribute to the [CaMn4O5] cluster site. A propeptide spanning residues 345–353 is cleaved from the precursor; the sequence is AVEAPSTNG.

The protein belongs to the reaction center PufL/M/PsbA/D family. PSII is composed of 1 copy each of membrane proteins PsbA, PsbB, PsbC, PsbD, PsbE, PsbF, PsbH, PsbI, PsbJ, PsbK, PsbL, PsbM, PsbT, PsbX, PsbY, PsbZ, Psb30/Ycf12, at least 3 peripheral proteins of the oxygen-evolving complex and a large number of cofactors. It forms dimeric complexes. Requires The D1/D2 heterodimer binds P680, chlorophylls that are the primary electron donor of PSII, and subsequent electron acceptors. It shares a non-heme iron and each subunit binds pheophytin, quinone, additional chlorophylls, carotenoids and lipids. D1 provides most of the ligands for the Mn4-Ca-O5 cluster of the oxygen-evolving complex (OEC). There is also a Cl(-1) ion associated with D1 and D2, which is required for oxygen evolution. The PSII complex binds additional chlorophylls, carotenoids and specific lipids. as cofactor. Tyr-161 forms a radical intermediate that is referred to as redox-active TyrZ, YZ or Y-Z. In terms of processing, C-terminally processed by CTPA; processing is essential to allow assembly of the oxygen-evolving complex and thus photosynthetic growth.

The protein resides in the plastid. It is found in the chloroplast thylakoid membrane. It catalyses the reaction 2 a plastoquinone + 4 hnu + 2 H2O = 2 a plastoquinol + O2. Photosystem II (PSII) is a light-driven water:plastoquinone oxidoreductase that uses light energy to abstract electrons from H(2)O, generating O(2) and a proton gradient subsequently used for ATP formation. It consists of a core antenna complex that captures photons, and an electron transfer chain that converts photonic excitation into a charge separation. The D1/D2 (PsbA/PsbD) reaction center heterodimer binds P680, the primary electron donor of PSII as well as several subsequent electron acceptors. The protein is Photosystem II protein D1 of Drimys granadensis.